A 102-amino-acid polypeptide reads, in one-letter code: uncharacterized protein (102 aa).

The next 2 membrane-spanning stretches (helical) occupy residues 21–43 (FSSS…TPVF) and 58–80 (SFAV…YFFC).

It is found in the membrane. This is an uncharacterized protein from Saccharomyces cerevisiae (strain ATCC 204508 / S288c) (Baker's yeast).